A 406-amino-acid polypeptide reads, in one-letter code: Tyrosine--tRNA ligase (406 aa).

An L-tyrosine-binding site is contributed by Tyr35. The 'HIGH' region motif lies at Ala40 to His49. L-tyrosine contacts are provided by Tyr167 and Gln171. A 'KMSKS' region motif is present at residues Lys227–Ser231. Lys230 lines the ATP pocket. The 65-residue stretch at Ile341–Val405 folds into the S4 RNA-binding domain.

It belongs to the class-I aminoacyl-tRNA synthetase family. TyrS type 1 subfamily. In terms of assembly, homodimer.

Its subcellular location is the cytoplasm. It carries out the reaction tRNA(Tyr) + L-tyrosine + ATP = L-tyrosyl-tRNA(Tyr) + AMP + diphosphate + H(+). In terms of biological role, catalyzes the attachment of tyrosine to tRNA(Tyr) in a two-step reaction: tyrosine is first activated by ATP to form Tyr-AMP and then transferred to the acceptor end of tRNA(Tyr). The polypeptide is Tyrosine--tRNA ligase (Borrelia duttonii (strain Ly)).